We begin with the raw amino-acid sequence, 479 residues long: UDP-N-acetylmuramate--L-alanine ligase (479 aa).

ATP is bound at residue 115-121 (GTHGKTT).

This sequence belongs to the MurCDEF family.

The protein resides in the cytoplasm. It catalyses the reaction UDP-N-acetyl-alpha-D-muramate + L-alanine + ATP = UDP-N-acetyl-alpha-D-muramoyl-L-alanine + ADP + phosphate + H(+). The protein operates within cell wall biogenesis; peptidoglycan biosynthesis. Functionally, cell wall formation. This Acidiphilium cryptum (strain JF-5) protein is UDP-N-acetylmuramate--L-alanine ligase.